A 677-amino-acid chain; its full sequence is Methionine--tRNA ligase (677 aa).

Positions 15 to 25 (PYANGSIHLGH) match the 'HIGH' region motif. Zn(2+) contacts are provided by C146, C149, C159, and C162. Residues 333-337 (KMSKS) carry the 'KMSKS' region motif. K336 provides a ligand contact to ATP. The region spanning 575–677 (DFAKVDLRVA…DGAKPGQQVK (103 aa)) is the tRNA-binding domain.

It belongs to the class-I aminoacyl-tRNA synthetase family. MetG type 1 subfamily. Homodimer. Zn(2+) is required as a cofactor.

It is found in the cytoplasm. The catalysed reaction is tRNA(Met) + L-methionine + ATP = L-methionyl-tRNA(Met) + AMP + diphosphate. Functionally, is required not only for elongation of protein synthesis but also for the initiation of all mRNA translation through initiator tRNA(fMet) aminoacylation. The chain is Methionine--tRNA ligase from Klebsiella pneumoniae (strain 342).